We begin with the raw amino-acid sequence, 448 residues long: MTTPTAIRRLDAADPDFARHLDHLLSWESVSDDSVNQRVLDIIKAVRERGDAALVELTQKFDGLQVASMAELILPRERLELALTRITPVQRQALEKAAERVRSYHEKQKQDSWSYTEADGTVLGQKVTPLDRAGLYVPGGKASYPSSVLMNAIPAKVAGVTEVVMVVPTPRGEINELVLAAACIAGVDRVFTIGGAQAVAALAYGTESVPKVDKVVGPGNIYVATAKRHVFGQVGIDMIAGPSEILVVCDGQTDPDWIAMDLFSQAEHDEDAQAILVSPDAEFLDKVAASITRLLPTMARAAIVETSINGRGALIKVADMAQAIEVANRIAPEHLELSVADPEAWLPHIRHAGAIFMGRHTSEALGDYCAGPNHVLPTSGTARFSSPLGVYDFQKRSSIIYCSPEGASELGKTASVLARGESLSGHARSAEYRITDLDWKTGNLEEGK.

NAD(+) contacts are provided by Y136, Q197, and N220. Substrate is bound by residues S243, Q265, and H268. Zn(2+) is bound by residues Q265 and H268. Catalysis depends on proton acceptor residues E333 and H334. Positions 334, 367, 421, and 426 each coordinate substrate. D367 is a Zn(2+) binding site. H426 is a binding site for Zn(2+).

Belongs to the histidinol dehydrogenase family. It depends on Zn(2+) as a cofactor.

It catalyses the reaction L-histidinol + 2 NAD(+) + H2O = L-histidine + 2 NADH + 3 H(+). The protein operates within amino-acid biosynthesis; L-histidine biosynthesis; L-histidine from 5-phospho-alpha-D-ribose 1-diphosphate: step 9/9. Its function is as follows. Catalyzes the sequential NAD-dependent oxidations of L-histidinol to L-histidinaldehyde and then to L-histidine. This chain is Histidinol dehydrogenase, found in Pseudomonas syringae pv. tomato (strain ATCC BAA-871 / DC3000).